The chain runs to 466 residues: tRNA(Ile)-lysidine synthase (466 aa).

Position 42 to 47 (42 to 47 (SGGVDS)) interacts with ATP.

Belongs to the tRNA(Ile)-lysidine synthase family.

The protein localises to the cytoplasm. It catalyses the reaction cytidine(34) in tRNA(Ile2) + L-lysine + ATP = lysidine(34) in tRNA(Ile2) + AMP + diphosphate + H(+). Functionally, ligates lysine onto the cytidine present at position 34 of the AUA codon-specific tRNA(Ile) that contains the anticodon CAU, in an ATP-dependent manner. Cytidine is converted to lysidine, thus changing the amino acid specificity of the tRNA from methionine to isoleucine. The chain is tRNA(Ile)-lysidine synthase from Anaplasma marginale (strain St. Maries).